A 657-amino-acid chain; its full sequence is MASAGKPNIDDGRRGTSSPKLKGRDHAKDTLCRNVTIYGRCRYEDKGCVFNHDPSRVNDAQHPERSSSKKRFNVDSPSFTPSATPLNGSSGLKKSATISPKAANAAPFLPKGVLSRSNAATPQSQPETSTPEWSIGEIQDFVPQGFDTSHVESIHGHGNGVLSTPAYDPFVSSSTPLGASGAVTHQVQPNPYSHDPSAIGGAAFFGAHNAFQQPVQYHLYAPIGPHNQNILGYQRNIHDLFLPNSFREELQKKAAATLQTLPNSQLPTQIDYFHSLVPLDLSHQKNAAIFGYPSWVYKAQSSKDGNFYALRRLEGFRLTNEKAIRSVQNWKRVSCGSVVTVHDAFTNRSFQDSSLIFVTDYHPLSKTLAEQHLADGQGRYQGRHTSGHIPEQILWSYVTQIANALKAIHSAGLAARVIEPSKILLTGKNRIRLNACGILDVVQFDSQRPLADLQHQDLVNFGQLILTLGANSPSLMHNPTKATEHFNRSYSAQLNNSVYWLLSGMQKDQERTIDIFISGISSQLMSTFDSSLHLDDQLISDLSRELENARLVRLLTKLNFINERPEYEHDRQWSENGERYFLKLFRDYVFHQVDAQNAPVVDLGHVLTCLNKLDAGTDEKVTLISRDEQSCFIVSYKELKKAVEASFQALLKPARRI.

Disordered stretches follow at residues 1–29 (MASAGKPNIDDGRRGTSSPKLKGRDHAKD), 52–98 (HDPS…SATI), and 115–135 (SRSNAATPQSQPETSTPEWSI). The segment at 27 to 55 (AKDTLCRNVTIYGRCRYEDKGCVFNHDPS) adopts a C3H1-type zinc-finger fold. Residues 52 to 67 (HDPSRVNDAQHPERSS) show a composition bias toward basic and acidic residues. 2 stretches are compositionally biased toward polar residues: residues 75 to 98 (DSPSFTPSATPLNGSSGLKKSATI) and 115 to 132 (SRSNAATPQSQPETSTPE). Residues 259–521 (QTLPNSQLPT…TIDIFISGIS (263 aa)) form a pseudokinase domain region. Residues arginine 311, 360-367 (DYHPLSKT), and 421-422 (SK) each bind ATP. Residues 522–560 (SQLMSTFDSSLHLDDQLISDLSRELENARLVRLLTKLNF) adopt a coiled-coil conformation. A knob domain region spans residues 561-657 (INERPEYEHD…QALLKPARRI (97 aa)).

It belongs to the protein kinase superfamily. PAN3 family. Homodimer. Forms a heterotrimer with a catalytic subunit PAN2 to form the poly(A)-nuclease (PAN) deadenylation complex. Interacts (via PAM-2 motif) with poly(A)-binding protein PAB1 (via PABC domain), conferring substrate specificity of the enzyme complex.

The protein resides in the cytoplasm. Regulatory subunit of the poly(A)-nuclease (PAN) deadenylation complex, one of two cytoplasmic mRNA deadenylases involved in mRNA turnover. PAN specifically shortens poly(A) tails of RNA and the activity is stimulated by poly(A)-binding protein PAB1. PAN deadenylation is followed by rapid degradation of the shortened mRNA tails by the CCR4-NOT complex. Deadenylated mRNAs are then degraded by two alternative mechanisms, namely exosome-mediated 3'-5' exonucleolytic degradation, or deadenylation-dependent mRNA decaping and subsequent 5'-3' exonucleolytic degradation by XRN1. May also be involved in post-transcriptional maturation of mRNA poly(A) tails. PAN3 acts as a positive regulator for PAN activity, recruiting the catalytic subunit PAN2 to mRNA via its interaction with RNA and with PAB1. The sequence is that of PAN2-PAN3 deadenylation complex subunit PAN3 from Coccidioides immitis (strain RS) (Valley fever fungus).